Consider the following 220-residue polypeptide: DNA-directed RNA polymerase subunit alpha (220 aa).

Belongs to the RNA polymerase alpha chain family. In plastids the minimal PEP RNA polymerase catalytic core is composed of four subunits: alpha, beta, beta', and beta''. When a (nuclear-encoded) sigma factor is associated with the core the holoenzyme is formed, which can initiate transcription.

It localises to the plastid. It catalyses the reaction RNA(n) + a ribonucleoside 5'-triphosphate = RNA(n+1) + diphosphate. In terms of biological role, DNA-dependent RNA polymerase catalyzes the transcription of DNA into RNA using the four ribonucleoside triphosphates as substrates. The sequence is that of DNA-directed RNA polymerase subunit alpha (rpoA) from Euglena longa (Euglenophycean alga).